The primary structure comprises 335 residues: MGEKIGVIGAGSWGTTLANLLAKKGLDVTLWAYEPELVAEMRATRVNTLFLPGTELAAGLAFTNSLEEAAAGKDVLVLVSPSQVMRSVLTQLAPLLKPGVTLVNASKGIELDTLMTMDQVCGAVLPPAVAGRFCVLSGPSFAREVAQEMPTAVVAASADLEAAAQVQRLFTAPYFRVYTNSDVVGVEIGGALKNVIALAAGISDGLGLGHNTRAALITRGLAEMNRLGRAMGADPATFAGLAGMGDLVLTCTGDLSRNRTVGMKLGQGMRLAEILGEMRMVAEGVKTAESAWRLASQMGVDMPITEKVYQVLYEDKPARQAVLELMTRDPKAERG.

Residues Ser-12, Trp-13, and Lys-107 each coordinate NADPH. Lys-107, Gly-138, and Ser-140 together coordinate sn-glycerol 3-phosphate. An NADPH-binding site is contributed by Ala-142. Residues Lys-193, Asp-246, Ser-256, Arg-257, and Asn-258 each contribute to the sn-glycerol 3-phosphate site. Lys-193 acts as the Proton acceptor in catalysis. Arg-257 is a binding site for NADPH. NADPH contacts are provided by Val-281 and Glu-283.

The protein belongs to the NAD-dependent glycerol-3-phosphate dehydrogenase family.

It is found in the cytoplasm. It catalyses the reaction sn-glycerol 3-phosphate + NAD(+) = dihydroxyacetone phosphate + NADH + H(+). It carries out the reaction sn-glycerol 3-phosphate + NADP(+) = dihydroxyacetone phosphate + NADPH + H(+). Its pathway is membrane lipid metabolism; glycerophospholipid metabolism. Its function is as follows. Catalyzes the reduction of the glycolytic intermediate dihydroxyacetone phosphate (DHAP) to sn-glycerol 3-phosphate (G3P), the key precursor for phospholipid synthesis. This Geobacter metallireducens (strain ATCC 53774 / DSM 7210 / GS-15) protein is Glycerol-3-phosphate dehydrogenase [NAD(P)+].